Reading from the N-terminus, the 442-residue chain is Chromosomal replication initiator protein DnaA (442 aa).

Residues 1 to 68 (MDAWPRCLER…ELLAYFVGNG (68 aa)) are domain I, interacts with DnaA modulators. The segment at 68-104 (GDVALAVGSRPRAPEPAPAPVAVPSAPQAAPIVPFAG) is domain II. The interval 105 to 322 (NLDSHYTFAN…GALNTLVARA (218 aa)) is domain III, AAA+ region. Gly150, Gly152, Lys153, and Thr154 together coordinate ATP. Positions 323-442 (NFTGRSITVE…WEKLIRKLSE (120 aa)) are domain IV, binds dsDNA.

It belongs to the DnaA family. As to quaternary structure, oligomerizes as a right-handed, spiral filament on DNA at oriC.

The protein resides in the cytoplasm. Functionally, plays an essential role in the initiation and regulation of chromosomal replication. ATP-DnaA binds to the origin of replication (oriC) to initiate formation of the DNA replication initiation complex once per cell cycle. Binds the DnaA box (a 9 base pair repeat at the origin) and separates the double-stranded (ds)DNA. Forms a right-handed helical filament on oriC DNA; dsDNA binds to the exterior of the filament while single-stranded (ss)DNA is stabiized in the filament's interior. The ATP-DnaA-oriC complex binds and stabilizes one strand of the AT-rich DNA unwinding element (DUE), permitting loading of DNA polymerase. After initiation quickly degrades to an ADP-DnaA complex that is not apt for DNA replication. Binds acidic phospholipids. The sequence is that of Chromosomal replication initiator protein DnaA from Xanthomonas axonopodis pv. citri (strain 306).